We begin with the raw amino-acid sequence, 218 residues long: 3,4-dihydroxy-2-butanone 4-phosphate synthase (218 aa).

D-ribulose 5-phosphate is bound by residues 38-39 (RE), aspartate 43, 151-155 (RRGHT), and glutamate 175. Mg(2+) is bound at residue glutamate 39. Histidine 154 is a binding site for Mg(2+).

It belongs to the DHBP synthase family. Homodimer. It depends on Mg(2+) as a cofactor. Requires Mn(2+) as cofactor.

It carries out the reaction D-ribulose 5-phosphate = (2S)-2-hydroxy-3-oxobutyl phosphate + formate + H(+). Its pathway is cofactor biosynthesis; riboflavin biosynthesis; 2-hydroxy-3-oxobutyl phosphate from D-ribulose 5-phosphate: step 1/1. Functionally, catalyzes the conversion of D-ribulose 5-phosphate to formate and 3,4-dihydroxy-2-butanone 4-phosphate. This is 3,4-dihydroxy-2-butanone 4-phosphate synthase from Vibrio vulnificus (strain CMCP6).